The chain runs to 473 residues: Putative tyrosine recombinase XerC (473 aa).

The Core-binding (CB) domain maps to Met4–Met82. In terms of domain architecture, Tyr recombinase spans Arg118–Asn305. Residues Arg156, Lys183, His256, Arg259, and His283 contribute to the active site. The active-site O-(3'-phospho-DNA)-tyrosine intermediate is the Tyr292. Residues Ser341–Ser352 show a composition bias toward polar residues. A disordered region spans residues Ser341–Pro365.

This sequence belongs to the 'phage' integrase family.

The protein localises to the cytoplasm. Site-specific tyrosine recombinase, which acts by catalyzing the cutting and rejoining of the recombining DNA molecules. The protein is Putative tyrosine recombinase XerC of Pseudomonas syringae.